Reading from the N-terminus, the 792-residue chain is MPNQGEDCYFYFYSTCAKGDSCPFRHCEAALGNETVCTLWQEGRCFRQVCRFRHMEIDKKRSEIPCYWENQPVGCQKLNCAFHHTRSRYVDGLFLPPSKTVLPTVPESQEEEVKTSQLTVQQSKLSVQSNPSPQLRSVMKVESSENVPSPTHPPVVINAADDDEDDDDQFSEEGDESKTPALQPSPDVHNGLRVASARKPGVSLKQGECLNFGIKTLEEIKSKKMKEKSKKQGEGSSGVSSVLQQPQPNPGPEKENVRTVVRMVTLSSKPEEPLVRLSLSERLGKRKLSVGGDSDPPLKRSLAQRLGKKVESPETNIDKAPKKERGHKAGEIHVKTLEEILLERASQKRGELQTKLKAEEPSGADDSPSGTKSSSSVRIKTFSEVLAEKKHRQQEMERQKSKKDTSCLTLTDDTEMKKTVSLPTVAVSKGQPEEPAGRARSMQEVHIKTLEEIKLEKALRVQQSSESSGNSRPQAEAAPGTKRLLRITKRAGVKEEKKCGLEDSGDPPQSSVTKMEANETSDETISDPTKLAVNRCDTVKEKHTQRLQERGASQKEKAALSSVRGDEASSYTRVAGKPVLTAVSGVTRHLAKRLPVESSQKGEVETSGIGDSILNVKCAAQTLEKRSKVKPKVNVKPSVVKVVSAPKLAPKRKAVEMHSAVIAAVKPLSSSSVLQESPTKKAAVAVVPLLSEDKPVTMSETENPKDSSVLSSAQAASEPLLPEGSGPSSSQTATKPRRLSSASTGKPPLSVEDDFEKLIWEISGGKLEAEIDLDPGKDEDDLLLELSEMIDS.

C3H1-type zinc fingers lie at residues 2-29, 31-57, and 60-87; these read PNQGEDCYFYFYSTCAKGDSCPFRHCEA, LGNETVCTLWQEGRCFRQVCRFRHMEI, and KRSEIPCYWENQPVGCQKLNCAFHHTRS. 3 disordered regions span residues 103 to 191, 223 to 331, and 345 to 443; these read PTVP…VHNG, KKMK…KAGE, and ASQK…RSMQ. Residue serine 108 is modified to Phosphoserine. Residues lysine 114 and lysine 124 each participate in a glycyl lysine isopeptide (Lys-Gly) (interchain with G-Cter in SUMO2) cross-link. Residues 115–135 show a composition bias toward polar residues; it reads TSQLTVQQSKLSVQSNPSPQL. Phosphoserine is present on serine 132. A Glycyl lysine isopeptide (Lys-Gly) (interchain with G-Cter in SUMO2) cross-link involves residue lysine 140. 3 positions are modified to phosphoserine: serine 149, serine 171, and serine 289. The span at 160 to 175 shows a compositional bias: acidic residues; that stretch reads ADDDEDDDDQFSEEGD. 2 stretches are compositionally biased toward basic and acidic residues: residues 308–331 and 345–360; these read KKVESPETNIDKAPKKERGHKAGE and ASQKRGELQTKLKAEE. The stretch at 338–360 forms a coiled coil; sequence EEILLERASQKRGELQTKLKAEE. Serine 346 is subject to Phosphoserine. Residues 367–376 are compositionally biased toward low complexity; it reads SPSGTKSSSS. 2 stretches are compositionally biased toward basic and acidic residues: residues 393 to 405 and 431 to 443; these read QQEMERQKSKKDT and QPEEPAGRARSMQ. Lysine 454 participates in a covalent cross-link: Glycyl lysine isopeptide (Lys-Gly) (interchain with G-Cter in SUMO2). Disordered stretches follow at residues 458 to 531 and 545 to 571; these read ALRV…PTKL and QRLQERGASQKEKAALSSVRGDEASSY. The segment covering 461-473 has biased composition (polar residues); it reads VQQSSESSGNSRP. Composition is skewed to basic and acidic residues over residues 492 to 501 and 545 to 558; these read GVKEEKKCGL and QRLQERGASQKEKA. Lysine 601 is covalently cross-linked (Glycyl lysine isopeptide (Lys-Gly) (interchain with G-Cter in SUMO2)). Positions 690–750 are disordered; sequence LSEDKPVTMS…SASTGKPPLS (61 aa). The span at 698 to 715 shows a compositional bias: polar residues; that stretch reads MSETENPKDSSVLSSAQA. Residues 717-730 show a composition bias toward low complexity; sequence SEPLLPEGSGPSSS.

Interacts with TREX complex components THOC2, DDX39 and POLDIP3; the interactions are ATP-dependent. Interacts with PABPN1; this interaction retains ZC3H11A in nuclear speckles. Interacts with KPNA3.

Its subcellular location is the nucleus speckle. In terms of biological role, through its association with TREX complex components, may participate in the export and post-transcriptional coordination of selected mRNA transcripts, including those required to maintain the metabolic processes in embryonic cells. Binds RNA. The polypeptide is Zinc finger CCCH domain-containing protein 11A (Zc3h11a) (Mus musculus (Mouse)).